The primary structure comprises 225 residues: MSIKQWPEGERPREKLLERGAAALSDAELLAILLRVGTRGMSAVDLARYLLQEFGSLGRLMSAEVGKLSAYKGMGTASFTQFAVVREIGRRILAEELQESIVLSDPDTVADYLRFHLGQEKVEVSVALLLNRQNQLIAVRELSRGTVAENTIYIREIVKLALDEYADSLIIAHNHPGGSPEPSQEDIMFTRRLAQAMSLVDVSLLDHFIVTSQSVCSFRQLGLMP.

The MPN domain maps to 102–224; the sequence is VLSDPDTVAD…VCSFRQLGLM (123 aa). His173, His175, and Asp186 together coordinate Zn(2+). A JAMM motif motif is present at residues 173-186; that stretch reads HNHPGGSPEPSQED.

It belongs to the UPF0758 family.

This chain is UPF0758 protein NMB1038, found in Neisseria meningitidis serogroup B (strain ATCC BAA-335 / MC58).